The chain runs to 423 residues: D-tagatose-1,6-bisphosphate aldolase subunit GatZ (423 aa).

Belongs to the GatZ/KbaZ family. GatZ subfamily. In terms of assembly, forms a complex with GatY.

The protein operates within carbohydrate metabolism; D-tagatose 6-phosphate degradation; D-glyceraldehyde 3-phosphate and glycerone phosphate from D-tagatose 6-phosphate: step 2/2. Its function is as follows. Component of the tagatose-1,6-bisphosphate aldolase GatYZ that is required for full activity and stability of the Y subunit. Could have a chaperone-like function for the proper and stable folding of GatY. When expressed alone, GatZ does not show any aldolase activity. Is involved in the catabolism of galactitol. The chain is D-tagatose-1,6-bisphosphate aldolase subunit GatZ from Klebsiella pneumoniae subsp. pneumoniae (strain ATCC 700721 / MGH 78578).